We begin with the raw amino-acid sequence, 636 residues long: Phosphomethylpyrimidine synthase (636 aa).

The interval 48–70 (DDTPTDFGGEKNPPVRVYDTSGP) is disordered. Substrate contacts are provided by residues asparagine 231, methionine 260, tyrosine 289, histidine 325, 345-347 (SRG), 386-389 (DGLR), and glutamate 425. Histidine 429 contributes to the Zn(2+) binding site. Tyrosine 452 lines the substrate pocket. Histidine 493 provides a ligand contact to Zn(2+). Cysteine 573, cysteine 576, and cysteine 581 together coordinate [4Fe-4S] cluster.

It belongs to the ThiC family. In terms of assembly, homodimer. It depends on [4Fe-4S] cluster as a cofactor.

It carries out the reaction 5-amino-1-(5-phospho-beta-D-ribosyl)imidazole + S-adenosyl-L-methionine = 4-amino-2-methyl-5-(phosphooxymethyl)pyrimidine + CO + 5'-deoxyadenosine + formate + L-methionine + 3 H(+). The protein operates within cofactor biosynthesis; thiamine diphosphate biosynthesis. Catalyzes the synthesis of the hydroxymethylpyrimidine phosphate (HMP-P) moiety of thiamine from aminoimidazole ribotide (AIR) in a radical S-adenosyl-L-methionine (SAM)-dependent reaction. This Cellvibrio japonicus (strain Ueda107) (Pseudomonas fluorescens subsp. cellulosa) protein is Phosphomethylpyrimidine synthase.